The primary structure comprises 339 residues: Nitrilase 2 (339 aa).

Ser2 is modified (N-acetylserine). A CN hydrolase domain is found at 18–290 (VRATIVQAST…EGLITADLDL (273 aa)). The active-site Proton acceptor is Glu58. Catalysis depends on Lys145, which acts as the Proton donor. Cys179 acts as the Nucleophile in catalysis.

Belongs to the carbon-nitrogen hydrolase superfamily. Nitrilase family.

The protein localises to the cell membrane. The catalysed reaction is a nitrile + 2 H2O = a carboxylate + NH4(+). Functionally, can convert indole-3-acetonitrile to the plant hormone indole-3-acetic acid. This chain is Nitrilase 2 (NIT2), found in Arabidopsis thaliana (Mouse-ear cress).